We begin with the raw amino-acid sequence, 93 residues long: Class II hydrophobin 1 (93 aa).

A signal peptide spans 1–16 (MKFFAVAALFVASAMA). 4 disulfides stabilise this stretch: Cys-24–Cys-74, Cys-35–Cys-65, Cys-36–Cys-48, and Cys-75–Cys-86.

Belongs to the cerato-ulmin hydrophobin family. In terms of assembly, interacts with maize ubiquilin 1-like (UBL) protein. Homotetramer. Further self-assembles to form highly ordered films at water-air interfaces through intermolecular interactions.

The protein localises to the cell membrane. In terms of biological role, aerial growth, conidiation, and dispersal of filamentous fungi in the environment rely upon a capability of their secreting small amphipathic proteins called hydrophobins (HPBs) with low sequence identity. Class I can self-assemble into an outermost layer of rodlet bundles on aerial cell surfaces, conferring cellular hydrophobicity that supports fungal growth, development and dispersal; whereas Class II form highly ordered films at water-air interfaces through intermolecular interactions but contribute nothing to the rodlet structure. Hyd1 is a class II hydrophobin that acts as an elicitor of induced systemic resistance (ISR) in plants. During interaction with the plant, binds with the maize target protein UBL in order to recruit more UBL proteins in maize roots to elicit plant defense responses, including cell death as well as brassinosteroid, jasmonate (JA) and ethylene (ET) signaling. The protein is Class II hydrophobin 1 of Trichoderma harzianum (Hypocrea lixii).